Here is a 91-residue protein sequence, read N- to C-terminus: Small ribosomal subunit protein bS16 (91 aa).

The protein belongs to the bacterial ribosomal protein bS16 family.

The chain is Small ribosomal subunit protein bS16 from Streptococcus mutans serotype c (strain ATCC 700610 / UA159).